A 587-amino-acid chain; its full sequence is 5-aminolevulinate synthase, erythroid-specific, mitochondrial (587 aa).

The transit peptide at 1 to 49 directs the protein to the mitochondrion; it reads MVAAAMLLRSCPVLSKGPTGLLGKVAKTYQFLFGIGRCPILATQGPTCS. Arginine 163 contributes to the succinyl-CoA binding site. The pyridoxal 5'-phosphate site is built by cysteine 258 and phenylalanine 259. 2 residues coordinate succinyl-CoA: serine 280 and lysine 299. 3 residues coordinate pyridoxal 5'-phosphate: serine 332, histidine 360, and threonine 388. Lysine 391 is a catalytic residue. The residue at position 391 (lysine 391) is an N6-(pyridoxal phosphate)lysine. Pyridoxal 5'-phosphate is bound by residues threonine 420 and threonine 421. Threonine 508 contacts succinyl-CoA.

The protein belongs to the class-II pyridoxal-phosphate-dependent aminotransferase family. Homodimer. Interacts with SUCLA2. Requires pyridoxal 5'-phosphate as cofactor. Erythroid-specific.

It is found in the mitochondrion inner membrane. It catalyses the reaction succinyl-CoA + glycine + H(+) = 5-aminolevulinate + CO2 + CoA. The protein operates within porphyrin-containing compound metabolism; protoporphyrin-IX biosynthesis; 5-aminolevulinate from glycine: step 1/1. Its function is as follows. Catalyzes the pyridoxal 5'-phosphate (PLP)-dependent condensation of succinyl-CoA and glycine to form aminolevulinic acid (ALA), with CoA and CO2 as by-products. Contributes significantly to heme formation during erythropoiesis. This Rattus norvegicus (Rat) protein is 5-aminolevulinate synthase, erythroid-specific, mitochondrial (Alas2).